A 180-amino-acid polypeptide reads, in one-letter code: MLKLLSEIGPVIAFFAGFFYGGGIQHATLYMLITSVICITLCYVIDKKVSKLSIISTTVLLVSGSITLISGDSMYIKIKPTILYVIFGIIFLMSGIRKNPFIKYALESIVRLKEESWITLSYRTAAFFFFMAVVNEVVWRNCSDETWVKFKVFGVIPITFIFILLQLPLLLKNKLPDSKI.

Helical transmembrane passes span 4–24 (LLSEIGPVIAFFAGFFYGGGI), 25–45 (QHATLYMLITSVICITLCYVI), 49–69 (VSKLSIISTTVLLVSGSITLI), 76–96 (IKIKPTILYVIFGIIFLMSGI), 118–138 (ITLSYRTAAFFFFMAVVNEVV), and 150–170 (FKVFGVIPITFIFILLQLPLL).

The protein belongs to the YciB family.

It localises to the cell inner membrane. In terms of biological role, plays a role in cell envelope biogenesis, maintenance of cell envelope integrity and membrane homeostasis. This chain is Inner membrane-spanning protein YciB, found in Rickettsia africae (strain ESF-5).